The sequence spans 450 residues: Phosphoglucosamine mutase (450 aa).

Residue Ser-101 is the Phosphoserine intermediate of the active site. Positions 101, 240, 242, and 244 each coordinate Mg(2+). Ser-101 carries the post-translational modification Phosphoserine.

This sequence belongs to the phosphohexose mutase family. Mg(2+) is required as a cofactor. In terms of processing, activated by phosphorylation.

The enzyme catalyses alpha-D-glucosamine 1-phosphate = D-glucosamine 6-phosphate. Catalyzes the conversion of glucosamine-6-phosphate to glucosamine-1-phosphate. The polypeptide is Phosphoglucosamine mutase (Streptococcus equi subsp. zooepidemicus (strain MGCS10565)).